The primary structure comprises 492 residues: Probable small intestine urate exporter (492 aa).

The interval 1-20 is disordered; sequence MSTGADLKAREGDIPSDNMT. N-linked (GlcNAc...) asparagine glycans are attached at residues Asn18, Asn44, Asn53, Asn63, Asn72, and Asn87. 11 helical membrane-spanning segments follow: residues 112-132, 134-154, 156-176, 198-218, 225-245, 287-307, 327-347, 363-383, 393-413, 426-446, and 456-476; these read LSYG…VFGA, YVVG…PLAA, AGVA…VMVL, IAAS…GLIC, YIFY…FPLV, LPLW…STVM, ILSA…GLLA, KLFT…LPWV, FLVL…INFL, LLQV…GFFI, and NVFF…LIFS.

It belongs to the major facilitator superfamily. Sodium/anion cotransporter family. Expressed in the small intestine (at protein level).

Its subcellular location is the apical cell membrane. The enzyme catalyses 3 Na(+)(out) + phosphate(out) = 3 Na(+)(in) + phosphate(in). The catalysed reaction is urate(out) + n chloride(in) = urate(in) + n chloride(out). It carries out the reaction L-thyroxine(out) = L-thyroxine(in). It catalyses the reaction 3,3',5-triiodo-L-thyronine(out) = 3,3',5-triiodo-L-thyronine(in). Functionally, acts as a membrane potential-dependent organic anion transporter, the transport requires a low concentration of chloride ions. Mediates chloride-dependent transport of urate. Mediates sodium-independent high affinity transport of thyroid hormones including L-thyroxine (T4) and 3,3',5-triiodo-L-thyronine (T3). Can actively transport inorganic phosphate into cells via Na(+) cotransport. The protein is Probable small intestine urate exporter (Slc17a4) of Mus musculus (Mouse).